A 144-amino-acid chain; its full sequence is Peptide methionine sulfoxide reductase MsrB (144 aa).

The segment covering 1–12 (MDKQQGELRQRL) has biased composition (basic and acidic residues). The interval 1-25 (MDKQQGELRQRLTPEQYAVTQEAAT) is disordered. Positions 5-128 (QGELRQRLTP…NSAALKFIPV (124 aa)) constitute a MsrB domain. Catalysis depends on C117, which acts as the Nucleophile.

The protein belongs to the MsrB Met sulfoxide reductase family.

The catalysed reaction is L-methionyl-[protein] + [thioredoxin]-disulfide + H2O = L-methionyl-(R)-S-oxide-[protein] + [thioredoxin]-dithiol. This chain is Peptide methionine sulfoxide reductase MsrB, found in Lactiplantibacillus plantarum (strain ATCC BAA-793 / NCIMB 8826 / WCFS1) (Lactobacillus plantarum).